The following is a 1171-amino-acid chain: Phytochrome B (1171 aa).

Over residues 1–19 the composition is skewed to low complexity; sequence MASGSRATPTRSPSSARPA. Positions 1 to 53 are disordered; it reads MASGSRATPTRSPSSARPAAPRHQHHHSQSSGGSTSRAGGGGGGGGGGGGGAA. Residues 38-52 show a composition bias toward gly residues; sequence AGGGGGGGGGGGGGA. In terms of domain architecture, GAF spans 259–442; sequence DVKLLCDTVV…AFGLQLNMEL (184 aa). A phytochromobilin-binding site is contributed by Cys364. 2 PAS domains span residues 661–732 and 795–866; these read VARE…LRGD and DYKA…MIVL. Residues 943 to 1161 form the Histidine kinase domain; that stretch reads YIYQEIKNPL…FFHIVLELPQ (219 aa).

Belongs to the phytochrome family. As to quaternary structure, homodimer. Contains one covalently linked phytochromobilin chromophore.

In terms of biological role, regulatory photoreceptor which exists in two forms that are reversibly interconvertible by light: the Pr form that absorbs maximally in the red region of the spectrum and the Pfr form that absorbs maximally in the far-red region. Photoconversion of Pr to Pfr induces an array of morphogenic responses, whereas reconversion of Pfr to Pr cancels the induction of those responses. Pfr controls the expression of a number of nuclear genes including those encoding the small subunit of ribulose-bisphosphate carboxylase, chlorophyll A/B binding protein, protochlorophyllide reductase, rRNA, etc. It also controls the expression of its own gene(s) in a negative feedback fashion. In Oryza sativa subsp. japonica (Rice), this protein is Phytochrome B (PHYB).